A 341-amino-acid chain; its full sequence is Delta(1)-pyrroline-2-carboxylate/Delta(1)-piperideine-2-carboxylate reductase (341 aa).

The Charge relay system role is filled by Ser52. The active-site Proton donor is the His53. Arg57 is a substrate binding site. 125–129 contacts NADP(+); sequence HFAAL. Residue Thr165 participates in substrate binding. 183 to 185 contacts NADP(+); that stretch reads DMA. 191–192 is a binding site for substrate; the sequence is HG. Catalysis depends on Asp193, which acts as the Charge relay system. NADP(+) is bound by residues 235–236 and 308–314; these read HK and RMPGERR.

The protein belongs to the LDH2/MDH2 oxidoreductase family. As to quaternary structure, homodimer.

The enzyme catalyses L-pipecolate + NADP(+) = Delta(1)-piperideine-2-carboxylate + NADPH + H(+). It catalyses the reaction L-proline + NADP(+) = 1-pyrroline-2-carboxylate + NADPH + H(+). The catalysed reaction is N-methyl-L-alanine + NADP(+) + H2O = methylamine + pyruvate + NADPH + H(+). With respect to regulation, is inhibited by the substrate analog pyrrole-2-carboxylate, but not by N-formylphenylalanine. In terms of biological role, catalyzes the reduction of both Delta(1)-pyrroline-2-carboxylate (Pyr2C) and Delta(1)-piperideine-2-carboxylate (Pip2C) to L-proline and L-pipecolate, respectively, using NADPH as the electron donor. Can use NADH instead of NADPH, although with much less efficiency. Plays an essential role in the catabolism of D-proline and D-lysine, which allows P.putida to grow on each of these amino-acids as a sole carbon source; D-lysine appears to be catabolized only through the pipecolate pathway. Can also catalyze the reverse oxidation reactions, albeit at a much lower rate. To a lesser extent, is able to catalyze in vitro the NADPH-dependent formation of N-alkyl-L-amino acids from the corresponding alpha-oxo acids and alkylamines, e.g. the formation of N-methylalanine from pyruvate and N-methylamine; cannot use ammonia as substrate for these reductive amination reactions. Shows neither malate dehydrogenase nor lactate dehydrogenase activity. This is Delta(1)-pyrroline-2-carboxylate/Delta(1)-piperideine-2-carboxylate reductase from Pseudomonas putida (Arthrobacter siderocapsulatus).